We begin with the raw amino-acid sequence, 420 residues long: Nucleoporin NUP42 (420 aa).

The C3H1-type zinc-finger motif lies at 1–25 (MTICQFFLQGRCRFGDRCWNEHPGA). One copy of the FG 1 repeat lies at 14 to 15 (FG). The segment at 25–111 (ARGAGGARQP…FASPLSDEQK (87 aa)) is disordered. Positions 42–67 (SGNNRRGWNASSQRYSNVIQPSSFPK) are enriched in polar residues. 10 FG repeats span residues 82–83 (FG), 95–96 (FG), 218–219 (FG), 220–221 (FG), 228–229 (FG), 265–266 (FG), 271–272 (FG), 288–289 (FG), 345–346 (FG), and 364–365 (FG). Residues 87–102 (SGASTSRGFGSSQNPF) show a composition bias toward polar residues. Residues 323 to 345 (MAASPSGSTTAPPLRSGSSVVGF) form a disordered region. Positions 365-420 (GGSGISTSVLASGAADNALFTPRDQLMKEELEQFQSQRFTLGKIPLKPPPVELLTV) are interaction with GLE1.

Probable component of the nuclear pore complex (NPC). Interacts with nuclear export protein NXF1. Interacts with GLE1. Able to form a heterotrimer with NUP155 and GLE1 in vitro. Interacts with XPO1. In terms of processing, O-glycosylated.

It localises to the nucleus. The protein resides in the nuclear pore complex. It is found in the nucleus membrane. Its function is as follows. Required for the export of mRNAs containing poly(A) tails from the nucleus into the cytoplasm. In Mus musculus (Mouse), this protein is Nucleoporin NUP42 (Nup42).